A 455-amino-acid chain; its full sequence is Killer cell immunoglobulin-like receptor 3DL2 (455 aa).

The first 21 residues, 1-21, serve as a signal peptide directing secretion; the sequence is MSLTVVSMACVGFFLLQGAWP. Over 22–340 the chain is Extracellular; sequence LMGGQDKPFL…SKSGICRHLH (319 aa). Ig-like C2-type domains are found at residues 42–102, 137–202, and 237–300; these read GGHV…RPHS, GETV…VPHS, and GENV…FRAL. 2 cysteine pairs are disulfide-bonded: cysteine 49-cysteine 95 and cysteine 144-cysteine 195. Residues asparagine 179, asparagine 239, asparagine 273, and asparagine 306 are each glycosylated (N-linked (GlcNAc...) asparagine). Cysteine 244 and cysteine 293 are disulfide-bonded. Residues 341–360 traverse the membrane as a helical segment; sequence VLIGTSVVIFLFILLLFFLL. The Cytoplasmic portion of the chain corresponds to 361–455; the sequence is YRWCSNKKNA…APQSGLEGVF (95 aa).

This sequence belongs to the immunoglobulin superfamily. Interacts with peptide-free HLA-F open conformer. In terms of tissue distribution, expressed in astrocytes.

The protein resides in the cell membrane. Its function is as follows. Receptor on natural killer (NK) cells and T cells for MHC class I molecules. Upon binding of peptide-free HLA-F open conformer, negatively regulates NK and T cell effector functions. Acts as a receptor on astrocytes for HLA-F. Through interaction with HLA-F, may protect motor neurons from astrocyte-induced toxicity. The protein is Killer cell immunoglobulin-like receptor 3DL2 of Homo sapiens (Human).